The sequence spans 316 residues: Protein lifeguard 2 (316 aa).

The segment at 1–53 is disordered; that stretch reads MTQGKLSVANKAPGTEGQQQVHGEKKEAPAVPSAPPSYEEATSGEGMKAGAFP. A run of 3 helical transmembrane segments spans residues 106-126, 138-158, and 165-185; these read VYTI…LFTF, PGWY…LACC, and FPWN…LTGM. N-linked (GlcNAc...) asparagine glycosylation occurs at Asn191. 4 consecutive transmembrane segments (helical) span residues 194 to 214, 225 to 245, 250 to 270, and 290 to 310; these read SVLL…VFSF, GVLF…AILL, VPWL…LFLA, and IFGA…FLQL.

This sequence belongs to the BI1 family. LFG subfamily. In terms of assembly, interacts with FAS/TNFRSF6 and BAX.

The protein localises to the cell membrane. It is found in the membrane raft. It localises to the postsynaptic cell membrane. In terms of biological role, antiapoptotic protein which protects cells uniquely from Fas-induced apoptosis. Regulates Fas-mediated apoptosis in neurons by interfering with caspase-8 activation. Plays a role in cerebellar development by affecting cerebellar size, internal granular layer (IGL) thickness, and Purkinje cell (PC) development. The sequence is that of Protein lifeguard 2 (FAIM2) from Pongo abelii (Sumatran orangutan).